We begin with the raw amino-acid sequence, 492 residues long: Uridine-cytidine kinase D (492 aa).

Residues 36 to 56 (PLPKNKKDHDQSIESDSSFTR) are disordered. ATP is bound at residue 117 to 124 (GPVGAGKT). Positions 290–460 (EPVYVCKAKY…PQTFLYLYFK (171 aa)) constitute a CYTH domain. A compositionally biased stretch (low complexity) spans 468-483 (PNYSKLKPNNTNSKIL). Positions 468–492 (PNYSKLKPNNTNSKILKNNKDKKNL) are disordered.

The protein belongs to the uridine kinase family.

The catalysed reaction is uridine + ATP = UMP + ADP + H(+). The enzyme catalyses cytidine + ATP = CMP + ADP + H(+). The protein operates within pyrimidine metabolism; CTP biosynthesis via salvage pathway; CTP from cytidine: step 1/3. It functions in the pathway pyrimidine metabolism; UMP biosynthesis via salvage pathway; UMP from uridine: step 1/1. Functionally, catalyzes the conversion of uridine into uridine monophosphate and cytidine into cytidine monophosphate in the pyrimidine salvage pathway. This is Uridine-cytidine kinase D (udkD) from Dictyostelium discoideum (Social amoeba).